The following is a 292-amino-acid chain: Hydroxysqualene synthase (292 aa).

Belongs to the phytoene/squalene synthase family. HpnC subfamily.

It carries out the reaction presqualene diphosphate + H2O = hydroxysqualene + diphosphate. It participates in secondary metabolite biosynthesis; hopanoid biosynthesis. Functionally, involved in the biosynthesis of the hopanoid precursor squalene (SQ) from farnesyl diphosphate (FPP). Catalyzes the second step, the conversion of presqualene diphosphate (PSPP) to hydroxysqualene (HSQ). The polypeptide is Hydroxysqualene synthase (Rhodopseudomonas palustris (strain ATCC BAA-98 / CGA009)).